Consider the following 486-residue polypeptide: Probable glycine dehydrogenase (decarboxylating) subunit 2 (486 aa).

N6-(pyridoxal phosphate)lysine is present on K269.

Belongs to the GcvP family. C-terminal subunit subfamily. The glycine cleavage system is composed of four proteins: P, T, L and H. In this organism, the P 'protein' is a heterodimer of two subunits. Pyridoxal 5'-phosphate is required as a cofactor.

It carries out the reaction N(6)-[(R)-lipoyl]-L-lysyl-[glycine-cleavage complex H protein] + glycine + H(+) = N(6)-[(R)-S(8)-aminomethyldihydrolipoyl]-L-lysyl-[glycine-cleavage complex H protein] + CO2. Its function is as follows. The glycine cleavage system catalyzes the degradation of glycine. The P protein binds the alpha-amino group of glycine through its pyridoxal phosphate cofactor; CO(2) is released and the remaining methylamine moiety is then transferred to the lipoamide cofactor of the H protein. The sequence is that of Probable glycine dehydrogenase (decarboxylating) subunit 2 from Chlorobium phaeobacteroides (strain DSM 266 / SMG 266 / 2430).